The sequence spans 96 residues: UPF0235 protein Sputw3181_1321 (96 aa).

This sequence belongs to the UPF0235 family.

This is UPF0235 protein Sputw3181_1321 from Shewanella sp. (strain W3-18-1).